Reading from the N-terminus, the 452-residue chain is 3-phosphoshikimate 1-carboxyvinyltransferase (452 aa).

Over residues 1-17 the composition is skewed to low complexity; the sequence is MSHAAAAKPATARKSQA. The tract at residues 1 to 26 is disordered; the sequence is MSHAAAAKPATARKSQALSGTARVPG. Lys28, Ser29, and Arg33 together coordinate 3-phosphoshikimate. A phosphoenolpyruvate-binding site is contributed by Lys28. Phosphoenolpyruvate-binding residues include Gly100 and Arg128. Positions 174, 176, 327, and 354 each coordinate 3-phosphoshikimate. Gln176 is a binding site for phosphoenolpyruvate. Catalysis depends on Asp327, which acts as the Proton acceptor. Arg358 and Arg409 together coordinate phosphoenolpyruvate.

It belongs to the EPSP synthase family. Monomer.

Its subcellular location is the cytoplasm. It carries out the reaction 3-phosphoshikimate + phosphoenolpyruvate = 5-O-(1-carboxyvinyl)-3-phosphoshikimate + phosphate. The protein operates within metabolic intermediate biosynthesis; chorismate biosynthesis; chorismate from D-erythrose 4-phosphate and phosphoenolpyruvate: step 6/7. Its function is as follows. Catalyzes the transfer of the enolpyruvyl moiety of phosphoenolpyruvate (PEP) to the 5-hydroxyl of shikimate-3-phosphate (S3P) to produce enolpyruvyl shikimate-3-phosphate and inorganic phosphate. The polypeptide is 3-phosphoshikimate 1-carboxyvinyltransferase (Mesorhizobium japonicum (strain LMG 29417 / CECT 9101 / MAFF 303099) (Mesorhizobium loti (strain MAFF 303099))).